A 434-amino-acid chain; its full sequence is N-acylneuraminate cytidylyltransferase (434 aa).

Met1 is modified (N-acetylmethionine). Positions 1–42 are disordered; that stretch reads MDSVEKGAATSVSNPRGRPSRGRPPKLQRNSRGGQGRGVEKP. Residues 15-31 carry the BC1 motif motif; it reads PRGRPSRGRPPKLQRNS. 2 positions are modified to omega-N-methylarginine: Arg37 and Arg52. Positions 52, 62, 111, 120, 122, and 143 each coordinate substrate. The BC2 motif signature appears at 200–206; it reads KRPRRQD. Residue Arg201 is part of the active site. Positions 269–276 match the BC3 motif motif; it reads KEKLKEIK.

This sequence belongs to the CMP-NeuNAc synthase family. As to quaternary structure, homotetramer; the active enzyme is formed by a dimer of dimers.

The protein localises to the nucleus. It catalyses the reaction an N-acylneuraminate + CTP = a CMP-N-acyl-beta-neuraminate + diphosphate. The protein operates within amino-sugar metabolism; N-acetylneuraminate metabolism. Functionally, catalyzes the activation of N-acetylneuraminic acid (NeuNAc) to cytidine 5'-monophosphate N-acetylneuraminic acid (CMP-NeuNAc), a substrate required for the addition of sialic acid. Has some activity toward NeuNAc, N-glycolylneuraminic acid (Neu5Gc) or 2-keto-3-deoxy-D-glycero-D-galacto-nononic acid (KDN). This chain is N-acylneuraminate cytidylyltransferase (CMAS), found in Bos taurus (Bovine).